We begin with the raw amino-acid sequence, 76 residues long: Small ribosomal subunit protein bS18 (76 aa).

This sequence belongs to the bacterial ribosomal protein bS18 family. In terms of assembly, part of the 30S ribosomal subunit. Forms a tight heterodimer with protein bS6.

In terms of biological role, binds as a heterodimer with protein bS6 to the central domain of the 16S rRNA, where it helps stabilize the platform of the 30S subunit. In Psychrobacter arcticus (strain DSM 17307 / VKM B-2377 / 273-4), this protein is Small ribosomal subunit protein bS18.